The primary structure comprises 236 residues: Small ribosomal subunit protein uS3 (236 aa).

One can recognise a KH type-2 domain in the interval 39 to 107 (IRKFLKKELY…EISINIKEVK (69 aa)). Over residues 213–229 (QPEKKEEAPARDKEGRG) the composition is skewed to basic and acidic residues. The segment at 213 to 236 (QPEKKEEAPARDKEGRGTRRRGRQ) is disordered.

The protein belongs to the universal ribosomal protein uS3 family. Part of the 30S ribosomal subunit. Forms a tight complex with proteins S10 and S14.

Binds the lower part of the 30S subunit head. Binds mRNA in the 70S ribosome, positioning it for translation. In Wolinella succinogenes (strain ATCC 29543 / DSM 1740 / CCUG 13145 / JCM 31913 / LMG 7466 / NCTC 11488 / FDC 602W) (Vibrio succinogenes), this protein is Small ribosomal subunit protein uS3.